Consider the following 412-residue polypeptide: Serine hydroxymethyltransferase (412 aa).

(6S)-5,6,7,8-tetrahydrofolate contacts are provided by residues L117 and 121–123 (GHL). An N6-(pyridoxal phosphate)lysine modification is found at K226. E241 is a binding site for (6S)-5,6,7,8-tetrahydrofolate.

It belongs to the SHMT family. In terms of assembly, homodimer. Pyridoxal 5'-phosphate serves as cofactor.

The protein localises to the cytoplasm. The catalysed reaction is (6R)-5,10-methylene-5,6,7,8-tetrahydrofolate + glycine + H2O = (6S)-5,6,7,8-tetrahydrofolate + L-serine. It functions in the pathway one-carbon metabolism; tetrahydrofolate interconversion. It participates in amino-acid biosynthesis; glycine biosynthesis; glycine from L-serine: step 1/1. Its function is as follows. Catalyzes the reversible interconversion of serine and glycine with tetrahydrofolate (THF) serving as the one-carbon carrier. This reaction serves as the major source of one-carbon groups required for the biosynthesis of purines, thymidylate, methionine, and other important biomolecules. Also exhibits THF-independent aldolase activity toward beta-hydroxyamino acids, producing glycine and aldehydes, via a retro-aldol mechanism. The sequence is that of Serine hydroxymethyltransferase from Staphylococcus carnosus (strain TM300).